Here is a 433-residue protein sequence, read N- to C-terminus: Adenylosuccinate synthetase (433 aa).

Residues 12-18 (GDEGKGK) and 40-42 (GHT) each bind GTP. Asp-13 functions as the Proton acceptor in the catalytic mechanism. Mg(2+) contacts are provided by Asp-13 and Gly-40. Residues 13–16 (DEGK), 38–41 (NAGH), Thr-130, Arg-144, Gln-225, Thr-240, and Arg-304 each bind IMP. His-41 acts as the Proton donor in catalysis. Substrate is bound at residue 300-306 (ATTGRPR). Residues Arg-306, 332–334 (KLD), and 414–416 (SIG) each bind GTP.

It belongs to the adenylosuccinate synthetase family. Homodimer. It depends on Mg(2+) as a cofactor.

The protein localises to the cytoplasm. It carries out the reaction IMP + L-aspartate + GTP = N(6)-(1,2-dicarboxyethyl)-AMP + GDP + phosphate + 2 H(+). Its pathway is purine metabolism; AMP biosynthesis via de novo pathway; AMP from IMP: step 1/2. In terms of biological role, plays an important role in the de novo pathway of purine nucleotide biosynthesis. Catalyzes the first committed step in the biosynthesis of AMP from IMP. This Geobacter sulfurreducens (strain ATCC 51573 / DSM 12127 / PCA) protein is Adenylosuccinate synthetase.